Consider the following 319-residue polypeptide: MLIPSPDPFASCPGYYLPDFEPFKACTNISNFCNHARDVYNIEMLLRWAIFIIPCCMSFFALFLNIYIFYVLIPNLRKMNGRSKKKYIFILSRAVSASMSILAIFLLPVIIFLTHFNFWVIALFIIFEMLSFLSFIGGMVGTTLTIYIAVVHPMYYQRELSLRKCVLLILLLWVSAITVAISCGIVEAAFIGRNSPFSCDYGNCAGPVLIFGIVCIATAFSICLVIQLYVIISLWKLGIQSTKRGDYSSTSKALTGVKRKLFAGFFVFATMAIFEIASAIILVRSVSEQTQDLDACDKLSASTSRLQFVISCVVLTLLW.

Asn28 is a glycosylation site (N-linked (GlcNAc...) asparagine). 6 helical membrane passes run 49–69 (AIFI…IYIF), 107–127 (LPVI…FIIF), 131–151 (SFLS…IAVV), 166–186 (VLLI…CGIV), 206–226 (GPVL…CLVI), and 261–281 (LFAG…SAII).

It belongs to the G-protein coupled receptor 1 family. B0244 subfamily.

It localises to the cell membrane. The protein is Putative G-protein coupled receptor B0244.7 of Caenorhabditis elegans.